The following is a 369-amino-acid chain: tRNA/tmRNA (uracil-C(5))-methyltransferase (369 aa).

Residues Q190, Y218, N223, E239, and D301 each coordinate S-adenosyl-L-methionine. The Nucleophile role is filled by C326. Residue E360 is the Proton acceptor of the active site.

The protein belongs to the class I-like SAM-binding methyltransferase superfamily. RNA M5U methyltransferase family. TrmA subfamily.

The enzyme catalyses uridine(54) in tRNA + S-adenosyl-L-methionine = 5-methyluridine(54) in tRNA + S-adenosyl-L-homocysteine + H(+). The catalysed reaction is uridine(341) in tmRNA + S-adenosyl-L-methionine = 5-methyluridine(341) in tmRNA + S-adenosyl-L-homocysteine + H(+). Its function is as follows. Dual-specificity methyltransferase that catalyzes the formation of 5-methyluridine at position 54 (m5U54) in all tRNAs, and that of position 341 (m5U341) in tmRNA (transfer-mRNA). This is tRNA/tmRNA (uracil-C(5))-methyltransferase from Vibrio parahaemolyticus serotype O3:K6 (strain RIMD 2210633).